Here is a 482-residue protein sequence, read N- to C-terminus: Cobyric acid synthase (482 aa).

Positions 249–436 constitute a GATase cobBQ-type domain; that stretch reads QCKIACLALS…LHGLFTSDDF (188 aa). Cys331 functions as the Nucleophile in the catalytic mechanism. Residue His428 is part of the active site.

It belongs to the CobB/CobQ family. CobQ subfamily.

The protein operates within cofactor biosynthesis; adenosylcobalamin biosynthesis. Its function is as follows. Catalyzes amidations at positions B, D, E, and G on adenosylcobyrinic A,C-diamide. NH(2) groups are provided by glutamine, and one molecule of ATP is hydrogenolyzed for each amidation. This Bradyrhizobium diazoefficiens (strain JCM 10833 / BCRC 13528 / IAM 13628 / NBRC 14792 / USDA 110) protein is Cobyric acid synthase.